A 223-amino-acid polypeptide reads, in one-letter code: Neurotrophic factor BDNF precursor form (223 aa).

The N-terminal stretch at 1–5 (SCMKA) is a signal peptide. Positions 6 to 114 (APMKEVSIRG…AANMSMRVRR (109 aa)) are excised as a propeptide. Asn107 carries N-linked (GlcNAc...) asparagine glycosylation. 2 cysteine pairs are disulfide-bonded: Cys127-Cys194 and Cys172-Cys223.

The protein belongs to the NGF-beta family.

The protein localises to the secreted. Promotes the survival of neuronal populations that are all located either in the central nervous system or directly connected to it. The polypeptide is Neurotrophic factor BDNF precursor form (BDNF) (Aspidites melanocephalus (Black-headed python)).